The primary structure comprises 424 residues: Adenylosuccinate synthetase (424 aa).

GTP-binding positions include 11-17 (GDEGKGK) and 39-41 (GHT). Catalysis depends on aspartate 12, which acts as the Proton acceptor. 2 residues coordinate Mg(2+): aspartate 12 and glycine 39. IMP-binding positions include 12–15 (DEGK), 37–40 (NAGH), threonine 127, arginine 141, glutamine 223, threonine 238, and arginine 302. The Proton donor role is filled by histidine 40. 298 to 304 (TTTGRGR) is a substrate binding site. GTP is bound by residues arginine 304, 330–332 (KLD), and 412–414 (SVG).

Belongs to the adenylosuccinate synthetase family. In terms of assembly, homodimer. The cofactor is Mg(2+).

It is found in the cytoplasm. It carries out the reaction IMP + L-aspartate + GTP = N(6)-(1,2-dicarboxyethyl)-AMP + GDP + phosphate + 2 H(+). It functions in the pathway purine metabolism; AMP biosynthesis via de novo pathway; AMP from IMP: step 1/2. Plays an important role in the de novo pathway of purine nucleotide biosynthesis. Catalyzes the first committed step in the biosynthesis of AMP from IMP. This is Adenylosuccinate synthetase from Methanosarcina barkeri (strain Fusaro / DSM 804).